A 158-amino-acid chain; its full sequence is Large ribosomal subunit protein uL15 (158 aa).

A compositionally biased stretch (basic and acidic residues) spans 1–13 (MKLNEIKDNEGST). The tract at residues 1–44 (MKLNEIKDNEGSTHSRKRLGRGIGSGSGKTAGRGVKGQKSRSGV) is disordered. Over residues 21–35 (RGIGSGSGKTAGRGV) the composition is skewed to gly residues.

Belongs to the universal ribosomal protein uL15 family. Part of the 50S ribosomal subunit.

Binds to the 23S rRNA. This chain is Large ribosomal subunit protein uL15, found in Rhizobium etli (strain ATCC 51251 / DSM 11541 / JCM 21823 / NBRC 15573 / CFN 42).